The sequence spans 505 residues: Ent-kaurene oxidase 2 (505 aa).

Residues 3–23 (AFVPGGAGAAAAAVGGFVAAA) form a helical membrane-spanning segment. Heme is bound at residue C449.

The protein belongs to the cytochrome P450 family. Heme is required as a cofactor. In terms of tissue distribution, widely expressed.

The protein resides in the membrane. The enzyme catalyses ent-kaur-16-ene + 3 reduced [NADPH--hemoprotein reductase] + 3 O2 = ent-kaur-16-en-19-oate + 3 oxidized [NADPH--hemoprotein reductase] + 4 H2O + 4 H(+). It functions in the pathway plant hormone biosynthesis; gibberellin biosynthesis. Catalyzes three successive oxidations of the 4-methyl group of ent-kaurene giving kaurenoic acid, a key step in gibberellins (GAs) biosynthesis. GAs, which are involved many processes, including stem elongation, play a central role in plant development. This Oryza sativa subsp. japonica (Rice) protein is Ent-kaurene oxidase 2.